Consider the following 202-residue polypeptide: Complement component C8 gamma chain (202 aa).

The signal sequence occupies residues 1–23 (MVLRGRAVLLAVLLAAGSLGRWA). C96 and C188 are oxidised to a cystine. A glycan (N-linked (GlcNAc...) asparagine) is linked at N173.

It belongs to the calycin superfamily. Lipocalin family. As to quaternary structure, heterotrimer of 3 chains: alpha (C8A), beta (C8B) and gamma (C8G); the alpha and gamma chains are disulfide bonded. Component of the membrane attack complex (MAC), composed of complement C5b, C6, C7, C8A, C8B, C8G and multiple copies of the pore-forming subunit C9.

The protein localises to the secreted. It is found in the target cell membrane. With respect to regulation, membrane attack complex (MAC) assembly is inhibited by CD59, thereby protecting self-cells from damage during complement activation. MAC assembly is also inhibited by clusterin (CLU) chaperones that inhibit polymerization of C9. Functionally, component of the membrane attack complex (MAC), a multiprotein complex activated by the complement cascade, which inserts into a target cell membrane and forms a pore, leading to target cell membrane rupture and cell lysis. The MAC is initiated by proteolytic cleavage of C5 into complement C5b in response to the classical, alternative, lectin and GZMK complement pathways. The complement pathways consist in a cascade of proteins that leads to phagocytosis and breakdown of pathogens and signaling that strengthens the adaptive immune system. C8G, together with C8A and C8B, inserts into the target membrane, but does not form pores by itself. During MAC assembly, associates with C5b, C6 and C7 to form the C5b8 intermediate complex that inserts into the target membrane and traverses the bilayer increasing membrane rigidity. The sequence is that of Complement component C8 gamma chain (C8G) from Oryctolagus cuniculus (Rabbit).